A 108-amino-acid polypeptide reads, in one-letter code: Probable 4-amino-4-deoxy-L-arabinose-phosphoundecaprenol flippase subunit ArnE (108 aa).

The next 3 membrane-spanning stretches (helical) occupy residues 32–52 (PLLLWLGGSVLLLGMAMLVWL), 58–78 (VPVGVAYPMLSLNFIFVTLAA), and 85–105 (TLSLRHALGVILIVAGVAIMG). The EamA domain occupies 34–106 (LLWLGGSVLL…IVAGVAIMGS (73 aa)).

Belongs to the ArnE family. Heterodimer of ArnE and ArnF.

It is found in the cell inner membrane. It participates in bacterial outer membrane biogenesis; lipopolysaccharide biosynthesis. Functionally, translocates 4-amino-4-deoxy-L-arabinose-phosphoundecaprenol (alpha-L-Ara4N-phosphoundecaprenol) from the cytoplasmic to the periplasmic side of the inner membrane. In Erwinia tasmaniensis (strain DSM 17950 / CFBP 7177 / CIP 109463 / NCPPB 4357 / Et1/99), this protein is Probable 4-amino-4-deoxy-L-arabinose-phosphoundecaprenol flippase subunit ArnE.